A 151-amino-acid chain; its full sequence is Large ribosomal subunit protein uL15 (151 aa).

The segment at 1–57 is disordered; sequence MTLRLDSLKSNKGARRRKLRKGRGIAAGQGASCGFGMRGQKSRSGRPTRPGFEGGQM. A compositionally biased stretch (basic residues) spans 12–23; it reads KGARRRKLRKGR. Residues 25 to 37 are compositionally biased toward gly residues; the sequence is IAAGQGASCGFGM.

The protein belongs to the universal ribosomal protein uL15 family. Part of the 50S ribosomal subunit.

In terms of biological role, binds to the 23S rRNA. This Synechococcus sp. (strain CC9605) protein is Large ribosomal subunit protein uL15.